A 435-amino-acid polypeptide reads, in one-letter code: Tumor necrosis factor receptor superfamily member 3 (435 aa).

The signal sequence occupies residues 1-30; the sequence is MLLPWATSAPGLAWGPLVLGLFGLLAASQP. Over 31 to 227 the chain is Extracellular; sequence QAVPPYASEN…PPEMSGTMLM (197 aa). Asparagine 40 carries an N-linked (GlcNAc...) asparagine glycan. 4 TNFR-Cys repeats span residues 42–81, 82–124, 125–168, and 169–211; these read TCRDQEKEYYEPQHRICCSRCPPGTYVSAKCSRIRDTVCA, TCAE…KTQC, RCQP…NHCV, and PCKA…TTCK. Intrachain disulfides connect cysteine 43/cysteine 58, cysteine 59/cysteine 72, cysteine 62/cysteine 80, cysteine 83/cysteine 98, cysteine 101/cysteine 116, cysteine 104/cysteine 124, cysteine 126/cysteine 132, cysteine 139/cysteine 148, cysteine 142/cysteine 167, and cysteine 170/cysteine 185. An N-linked (GlcNAc...) asparagine glycan is attached at asparagine 177. A helical transmembrane segment spans residues 228 to 248; that stretch reads LAVLLPLAFFLLLATVFSCIW. The Cytoplasmic portion of the chain corresponds to 249–435; that stretch reads KSHPSLCRKL…GPRNQFITHD (187 aa). A Phosphoserine modification is found at serine 323. Positions 373–399 are enriched in pro residues; that stretch reads PGPGDLPATPEPPYPIPEEGDPGPPGL. A disordered region spans residues 373–435; the sequence is PGPGDLPATP…GPRNQFITHD (63 aa). Basic and acidic residues predominate over residues 403 to 417; that stretch reads HQEDGKAWHLAETEH. Residues 421 to 435 show a composition bias toward polar residues; it reads TPSNRGPRNQFITHD.

As to quaternary structure, self-associates; dimerization and trimerization are promoted by lymphotoxin (LTA(1)-LTB(2)). Associates with TRAF3. Associates with TRAF4. Associates with TRAF5. Interacts with Aedes aegypti lymphotoxin beta receptor inhibitor; the interaction reduces dimerization and trimerization of LTBR induced by lymphotoxin (LTA(1)-LTB(2)). (Microbial infection) Interacts with HCV core protein.

The protein localises to the membrane. Its function is as follows. Receptor for the heterotrimeric lymphotoxin containing LTA and LTB, and for TNFS14/LIGHT. Activates NF-kappa-B signaling pathway upon stimulation with lymphotoxin (LTA(1)-LTB(2)). Promotes apoptosis via TRAF3 and TRAF5. May play a role in the development of lymphoid organs. This chain is Tumor necrosis factor receptor superfamily member 3 (LTBR), found in Homo sapiens (Human).